Here is a 502-residue protein sequence, read N- to C-terminus: 4,4'-diapophytoene desaturase (4,4'-diaponeurosporene-forming) (502 aa).

5–17 (VIGAGVTGLAAAA) lines the FAD pocket.

This sequence belongs to the carotenoid/retinoid oxidoreductase family. CrtN subfamily.

It carries out the reaction 15-cis-4,4'-diapophytoene + 3 FAD + 3 H(+) = all-trans-4,4'-diaponeurosporene + 3 FADH2. It functions in the pathway carotenoid biosynthesis; staphyloxanthin biosynthesis; staphyloxanthin from farnesyl diphosphate: step 2/5. Its function is as follows. Involved in the biosynthesis of the yellow-orange carotenoid staphyloxanthin, which plays a role in the virulence via its protective function against oxidative stress. Catalyzes three successive dehydrogenation reactions that lead to the introduction of three double bonds into 4,4'-diapophytoene (dehydrosqualene), with 4,4'-diapophytofluene and 4,4'-diapo-zeta-carotene as intermediates, and 4,4'-diaponeurosporene (the major deep-yellow pigment in staphylococci strains) as the end product. The polypeptide is 4,4'-diapophytoene desaturase (4,4'-diaponeurosporene-forming) (Staphylococcus aureus (strain MRSA252)).